The primary structure comprises 578 residues: DNA mismatch repair protein MutL (578 aa).

It belongs to the DNA mismatch repair MutL/HexB family.

Functionally, this protein is involved in the repair of mismatches in DNA. It is required for dam-dependent methyl-directed DNA mismatch repair. May act as a 'molecular matchmaker', a protein that promotes the formation of a stable complex between two or more DNA-binding proteins in an ATP-dependent manner without itself being part of a final effector complex. This is DNA mismatch repair protein MutL from Carboxydothermus hydrogenoformans (strain ATCC BAA-161 / DSM 6008 / Z-2901).